Reading from the N-terminus, the 271-residue chain is uncharacterized protein (271 aa).

The signal sequence occupies residues 1–22; that stretch reads MIHSKRLKLCLCLIILSVFIGA. C23 carries N-palmitoyl cysteine lipidation. The S-diacylglycerol cysteine moiety is linked to residue C23.

It belongs to the staphylococcal tandem lipoprotein family.

The protein resides in the cell membrane. This is an uncharacterized protein from Staphylococcus aureus (strain MW2).